The sequence spans 284 residues: Bifunctional protein FolD (284 aa).

NADP(+) is bound by residues Gly-166–Ser-168 and Ile-232.

The protein belongs to the tetrahydrofolate dehydrogenase/cyclohydrolase family. In terms of assembly, homodimer.

The enzyme catalyses (6R)-5,10-methylene-5,6,7,8-tetrahydrofolate + NADP(+) = (6R)-5,10-methenyltetrahydrofolate + NADPH. The catalysed reaction is (6R)-5,10-methenyltetrahydrofolate + H2O = (6R)-10-formyltetrahydrofolate + H(+). It functions in the pathway one-carbon metabolism; tetrahydrofolate interconversion. Its function is as follows. Catalyzes the oxidation of 5,10-methylenetetrahydrofolate to 5,10-methenyltetrahydrofolate and then the hydrolysis of 5,10-methenyltetrahydrofolate to 10-formyltetrahydrofolate. This Alteromonas mediterranea (strain DSM 17117 / CIP 110805 / LMG 28347 / Deep ecotype) protein is Bifunctional protein FolD.